The following is a 201-amino-acid chain: Adenylyl-sulfate kinase (201 aa).

35 to 42 contributes to the ATP binding site; the sequence is GLSGSGKS. Ser109 functions as the Phosphoserine intermediate in the catalytic mechanism.

The protein belongs to the APS kinase family.

The catalysed reaction is adenosine 5'-phosphosulfate + ATP = 3'-phosphoadenylyl sulfate + ADP + H(+). It functions in the pathway sulfur metabolism; hydrogen sulfide biosynthesis; sulfite from sulfate: step 2/3. Catalyzes the synthesis of activated sulfate. This is Adenylyl-sulfate kinase from Citrobacter koseri (strain ATCC BAA-895 / CDC 4225-83 / SGSC4696).